The following is a 280-amino-acid chain: Putative pyruvate, phosphate dikinase regulatory protein (280 aa).

158 to 165 provides a ligand contact to ADP; that stretch reads GVSRTSKT.

It belongs to the pyruvate, phosphate/water dikinase regulatory protein family. PDRP subfamily.

The catalysed reaction is N(tele)-phospho-L-histidyl/L-threonyl-[pyruvate, phosphate dikinase] + ADP = N(tele)-phospho-L-histidyl/O-phospho-L-threonyl-[pyruvate, phosphate dikinase] + AMP + H(+). It carries out the reaction N(tele)-phospho-L-histidyl/O-phospho-L-threonyl-[pyruvate, phosphate dikinase] + phosphate + H(+) = N(tele)-phospho-L-histidyl/L-threonyl-[pyruvate, phosphate dikinase] + diphosphate. Bifunctional serine/threonine kinase and phosphorylase involved in the regulation of the pyruvate, phosphate dikinase (PPDK) by catalyzing its phosphorylation/dephosphorylation. This is Putative pyruvate, phosphate dikinase regulatory protein from Lactobacillus gasseri (strain ATCC 33323 / DSM 20243 / BCRC 14619 / CIP 102991 / JCM 1131 / KCTC 3163 / NCIMB 11718 / NCTC 13722 / AM63).